We begin with the raw amino-acid sequence, 329 residues long: tRNA uridine(34) hydroxylase (329 aa).

A Rhodanese domain is found at 123 to 217 (SDPDVILVDT…YLEEVPEEES (95 aa)). Cys177 acts as the Cysteine persulfide intermediate in catalysis. A disordered region spans residues 285–329 (REKQVQLSNARGETHVGGDAAHLIDQRKKEKLAHKEQQRSGKKAK). The segment covering 296-323 (GETHVGGDAAHLIDQRKKEKLAHKEQQR) has biased composition (basic and acidic residues).

The protein belongs to the TrhO family.

It catalyses the reaction uridine(34) in tRNA + AH2 + O2 = 5-hydroxyuridine(34) in tRNA + A + H2O. Functionally, catalyzes oxygen-dependent 5-hydroxyuridine (ho5U) modification at position 34 in tRNAs. This chain is tRNA uridine(34) hydroxylase, found in Vibrio atlanticus (strain LGP32) (Vibrio splendidus (strain Mel32)).